The primary structure comprises 1235 residues: Receptor-type adenylate cyclase ESAG 4 (1235 aa).

Positions 1-20 (MNMLHLSDRNASLAPSGGEH) are disordered. Over 1–32 (MNMLHLSDRNASLAPSGGEHSLPTGGAVCRDA) the chain is Cytoplasmic. A helical membrane pass occupies residues 33 to 53 (MDILPVILRAPVALLLLLVVL). Topologically, residues 54 to 858 (PQLSVGAEAN…SNAGRISGAS (805 aa)) are extracellular. 8 N-linked (GlcNAc...) asparagine glycosylation sites follow: asparagine 63, asparagine 90, asparagine 97, asparagine 362, asparagine 531, asparagine 566, asparagine 705, and asparagine 830. The chain crosses the membrane as a helical span at residues 859-879 (LVGIIIGGALALFLVVALGVV). Over 880 to 1235 (PYFFLRNTVI…VSSQVEERLL (356 aa)) the chain is Cytoplasmic. Positions 900-1054 (TLIFTDIESS…RTSNMAARTE (155 aa)) constitute a Guanylate cyclase domain. Residues aspartate 905 and aspartate 948 each coordinate Mg(2+).

Belongs to the adenylyl cyclase class-3 family. Mg(2+) serves as cofactor.

The protein localises to the membrane. It catalyses the reaction ATP = 3',5'-cyclic AMP + diphosphate. Could act as a receptor for an unknown ligand. This chain is Receptor-type adenylate cyclase ESAG 4 (ESAG4), found in Trypanosoma brucei brucei.